A 463-amino-acid chain; its full sequence is Glutathione amide reductase (463 aa).

The Ni(2+) site is built by threonine 2, glutamine 3, and histidine 4. Residues 14 to 15, glutamate 34, and threonine 41 contribute to the FAD site; that span reads SG. Cysteine 42 and cysteine 47 form a disulfide bridge. Residues lysine 50 and 113-114 each bind FAD; that span reads HA. Lysine 50 serves as a coordination point for NAD(+). NAD(+) is bound by residues 174 to 180, 197 to 198, valine 230, and glycine 261; these read AGYIGIE and LE. FAD-binding positions include aspartate 302 and 308-310; that span reads QLT. Residues glutamine 308 and valine 341 each coordinate NAD(+). An FAD-binding site is contributed by histidine 437. Histidine 437 acts as the Proton acceptor in catalysis.

It belongs to the class-I pyridine nucleotide-disulfide oxidoreductase family. As to quaternary structure, homodimer. FAD serves as cofactor.

It carries out the reaction 2 glutathione amide + NAD(+) = glutathione amide disulfide + NADH + H(+). In terms of biological role, catalyzes the reduction of glutathione amide disulfide (GASSAG) to restore glutathione amide (GASH) in the presence of NADH. May play a role in GASH metabolism under anaerobic conditions as a sulfide carrier necessary for cytoplasmic sulfide oxidation. The polypeptide is Glutathione amide reductase (Marichromatium gracile (Chromatium gracile)).